Consider the following 211-residue polypeptide: Thiamine-phosphate synthase (211 aa).

4-amino-2-methyl-5-(diphosphooxymethyl)pyrimidine is bound by residues 37 to 41 (QLRIK) and asparagine 69. The Mg(2+) site is built by aspartate 70 and aspartate 89. A 4-amino-2-methyl-5-(diphosphooxymethyl)pyrimidine-binding site is contributed by serine 108. A 2-[(2R,5Z)-2-carboxy-4-methylthiazol-5(2H)-ylidene]ethyl phosphate-binding site is contributed by 134-136 (TQT). Lysine 137 provides a ligand contact to 4-amino-2-methyl-5-(diphosphooxymethyl)pyrimidine. 2-[(2R,5Z)-2-carboxy-4-methylthiazol-5(2H)-ylidene]ethyl phosphate-binding positions include glycine 166 and 186–187 (VS).

The protein belongs to the thiamine-phosphate synthase family. Mg(2+) serves as cofactor.

It catalyses the reaction 2-[(2R,5Z)-2-carboxy-4-methylthiazol-5(2H)-ylidene]ethyl phosphate + 4-amino-2-methyl-5-(diphosphooxymethyl)pyrimidine + 2 H(+) = thiamine phosphate + CO2 + diphosphate. The catalysed reaction is 2-(2-carboxy-4-methylthiazol-5-yl)ethyl phosphate + 4-amino-2-methyl-5-(diphosphooxymethyl)pyrimidine + 2 H(+) = thiamine phosphate + CO2 + diphosphate. It carries out the reaction 4-methyl-5-(2-phosphooxyethyl)-thiazole + 4-amino-2-methyl-5-(diphosphooxymethyl)pyrimidine + H(+) = thiamine phosphate + diphosphate. The protein operates within cofactor biosynthesis; thiamine diphosphate biosynthesis; thiamine phosphate from 4-amino-2-methyl-5-diphosphomethylpyrimidine and 4-methyl-5-(2-phosphoethyl)-thiazole: step 1/1. Functionally, condenses 4-methyl-5-(beta-hydroxyethyl)thiazole monophosphate (THZ-P) and 2-methyl-4-amino-5-hydroxymethyl pyrimidine pyrophosphate (HMP-PP) to form thiamine monophosphate (TMP). In Salmonella choleraesuis (strain SC-B67), this protein is Thiamine-phosphate synthase.